Consider the following 786-residue polypeptide: LPS-assembly protein LptD (786 aa).

Positions 1–24 (MKKRIPTLLATMIASALYSHQGLA) are cleaved as a signal peptide. 2 disulfide bridges follow: C31–C726 and C173–C727.

It belongs to the LptD family. In terms of assembly, component of the lipopolysaccharide transport and assembly complex. Interacts with LptE and LptA. Post-translationally, contains two intramolecular disulfide bonds.

The protein resides in the cell outer membrane. In terms of biological role, together with LptE, is involved in the assembly of lipopolysaccharide (LPS) at the surface of the outer membrane. The protein is LPS-assembly protein LptD of Salmonella choleraesuis (strain SC-B67).